The sequence spans 349 residues: MSSNTASSSAGAAGSGDSSAARKNSKRPKYSKFTQQELPACKPILTPGWVISTFLIVSVIFIPLGVISLFASQDVVEIVDRYDTECIPAPARTNKVAYIQGDGDKVCNRDLKVTKRMKQPIYVYYQLENFYQNHRRYVKSRSDSQLRSTKYENQISACKPEDDVGGQPIVPCGLIAWSLFNDTYALSRNNVSLAVNKKGIAWKSDKEHKFGNKVFPKNFQKGNITGGATLDPRIPLSEQEDLIVWMRTAALPTFRKLYGKIESDLEMGDTIHVKLNNNYNTYSFNGKKKLVLSTTSWLGGKNDFLGIAYLTVGGICFILALAFTIMYLVKPRRLGDPSYLSWNRNPGGR.

A compositionally biased stretch (low complexity) spans 1–21 (MSSNTASSSAGAAGSGDSSAA). A disordered region spans residues 1–30 (MSSNTASSSAGAAGSGDSSAARKNSKRPKY). Residue S2 is modified to N-acetylserine. A helical membrane pass occupies residues 50 to 70 (VISTFLIVSVIFIPLGVISLF). Residues N181, N190, and N223 are each glycosylated (N-linked (GlcNAc...) asparagine). The helical transmembrane segment at 305 to 325 (LGIAYLTVGGICFILALAFTI) threads the bilayer.

This sequence belongs to the CDC50/LEM3 family. In terms of assembly, interacts with ALA2 and ALA3 in a heterologous system. In terms of tissue distribution, expressed in roots, leaves, stems, flowers and siliques.

It localises to the golgi apparatus membrane. The protein localises to the prevacuolar compartment membrane. It is found in the endoplasmic reticulum membrane. Functionally, required for the lipid transport activity of the ALA/ALIS P4-ATPase complex. In Arabidopsis thaliana (Mouse-ear cress), this protein is ALA-interacting subunit 3 (ALIS3).